The chain runs to 330 residues: Putative pentatricopeptide repeat-containing protein At5g36300 (330 aa).

PPR repeat units follow at residues 10-44, 45-75, 83-113, 114-148, 149-179, 185-215, 231-265, 266-296, and 302-330; these read SLSM…GSRP, DPLS…VVRF, VRLY…KFRL, NSFV…GLPM, DVEI…LQRS, NIRT…IFED, SANL…GIEP, NLIM…IKET, and DVVT…LVTL.

It belongs to the PPR family. P subfamily.

The sequence is that of Putative pentatricopeptide repeat-containing protein At5g36300 from Arabidopsis thaliana (Mouse-ear cress).